A 349-amino-acid polypeptide reads, in one-letter code: Phosphoribosylformylglycinamidine cyclo-ligase (349 aa).

The protein belongs to the AIR synthase family.

Its subcellular location is the cytoplasm. The catalysed reaction is 2-formamido-N(1)-(5-O-phospho-beta-D-ribosyl)acetamidine + ATP = 5-amino-1-(5-phospho-beta-D-ribosyl)imidazole + ADP + phosphate + H(+). The protein operates within purine metabolism; IMP biosynthesis via de novo pathway; 5-amino-1-(5-phospho-D-ribosyl)imidazole from N(2)-formyl-N(1)-(5-phospho-D-ribosyl)glycinamide: step 2/2. The polypeptide is Phosphoribosylformylglycinamidine cyclo-ligase (Albidiferax ferrireducens (strain ATCC BAA-621 / DSM 15236 / T118) (Rhodoferax ferrireducens)).